Consider the following 247-residue polypeptide: Peptidyl-prolyl cis-trans isomerase FKBP17-2, chloroplastic (247 aa).

The N-terminal 79 residues, 1-79 (MANLFTATAP…SSLTRRFGIG (79 aa)), are a transit peptide targeting the chloroplast. Positions 26–64 (QCYASSSNPPEPESSSPPPPPPPPQPLASQQKRKKNVET) are disordered. The span at 34–51 (PPEPESSSPPPPPPPPQP) shows a compositional bias: pro residues. In terms of domain architecture, PPIase FKBP-type spans 141–243 (GDLVVIDLKG…EYIVEIDRVS (103 aa)).

This sequence belongs to the FKBP-type PPIase family.

It localises to the plastid. Its subcellular location is the chloroplast thylakoid lumen. The enzyme catalyses [protein]-peptidylproline (omega=180) = [protein]-peptidylproline (omega=0). In terms of biological role, PPIases accelerate the folding of proteins. It catalyzes the cis-trans isomerization of proline imidic peptide bonds in oligopeptides. The protein is Peptidyl-prolyl cis-trans isomerase FKBP17-2, chloroplastic (FKBP17-2) of Arabidopsis thaliana (Mouse-ear cress).